The sequence spans 64 residues: Large ribosomal subunit protein bL35 (64 aa).

This sequence belongs to the bacterial ribosomal protein bL35 family.

This chain is Large ribosomal subunit protein bL35, found in Streptomyces avermitilis (strain ATCC 31267 / DSM 46492 / JCM 5070 / NBRC 14893 / NCIMB 12804 / NRRL 8165 / MA-4680).